The sequence spans 441 residues: Proline--tRNA ligase (441 aa).

Belongs to the class-II aminoacyl-tRNA synthetase family. ProS type 2 subfamily. As to quaternary structure, homodimer.

Its subcellular location is the cytoplasm. It catalyses the reaction tRNA(Pro) + L-proline + ATP = L-prolyl-tRNA(Pro) + AMP + diphosphate. In terms of biological role, catalyzes the attachment of proline to tRNA(Pro) in a two-step reaction: proline is first activated by ATP to form Pro-AMP and then transferred to the acceptor end of tRNA(Pro). This chain is Proline--tRNA ligase, found in Bartonella bacilliformis (strain ATCC 35685 / KC583 / Herrer 020/F12,63).